A 278-amino-acid chain; its full sequence is Large ribosomal subunit protein uL2 (278 aa).

The segment at 222-278 is disordered; it reads GVVMNPVDHPHGGGEGRTSGGRHPVTPWGKPTKGAKTRKNKSTDKFIIRSRHERKKR. The span at 269–278 shows a compositional bias: basic residues; that stretch reads IRSRHERKKR.

This sequence belongs to the universal ribosomal protein uL2 family. As to quaternary structure, part of the 50S ribosomal subunit. Forms a bridge to the 30S subunit in the 70S ribosome.

Functionally, one of the primary rRNA binding proteins. Required for association of the 30S and 50S subunits to form the 70S ribosome, for tRNA binding and peptide bond formation. It has been suggested to have peptidyltransferase activity; this is somewhat controversial. Makes several contacts with the 16S rRNA in the 70S ribosome. This Maricaulis maris (strain MCS10) (Caulobacter maris) protein is Large ribosomal subunit protein uL2.